The primary structure comprises 301 residues: ATP synthase gamma chain (301 aa).

It belongs to the ATPase gamma chain family. As to quaternary structure, F-type ATPases have 2 components, CF(1) - the catalytic core - and CF(0) - the membrane proton channel. CF(1) has five subunits: alpha(3), beta(3), gamma(1), delta(1), epsilon(1). CF(0) has three main subunits: a, b and c.

The protein localises to the cell inner membrane. Functionally, produces ATP from ADP in the presence of a proton gradient across the membrane. The gamma chain is believed to be important in regulating ATPase activity and the flow of protons through the CF(0) complex. In Bordetella pertussis (strain Tohama I / ATCC BAA-589 / NCTC 13251), this protein is ATP synthase gamma chain.